The chain runs to 327 residues: MAEGLVLKGTMRAHTDMVTAIATPIDNSDTIVSASRDKSIIVWKLTKDDKSYGVRQRRLTGHSHFVEDVVLSSDGQFALSGSWDGELRLWDLAAGVSTRRFVGHTKDVLSVAFSLDNRQIVSASRDRTIKLWNTLGECKYTISEGGEGHRDWVSCVRFSPNTLQPTIVSASCDKTVKVWNLSNCKLRSTLAGHTGYVSTVAVSPDGSLCASGGKDGVVLLWDLAEGKKLYSLEANSVIHALCFTPNRYWLCAATEQGIKIWDLESKTVVEDLKVDLKAEAEKSDGSGTAATKRKVIYCTSLNWSADGSTLFSGYTDGVIRVWGIGRY.

WD repeat units lie at residues 13–44, 61–91, 103–133, 148–180, 192–222, 233–262, and 293–323; these read AHTDMVTAIATPIDNSDTIVSASRDKSIIVWK, GHSHFVEDVVLSSDGQFALSGSWDGELRLWD, GHTKDVLSVAFSLDNRQIVSASRDRTIKLWN, GHRDWVSCVRFSPNTLQPTIVSASCDKTVKVWN, GHTGYVSTVAVSPDGSLCASGGKDGVVLLWD, EANSVIHALCFTPNRYWLCAATEQGIKIWD, and RKVIYCTSLNWSADGSTLFSGYTDGVIRVWG.

This sequence belongs to the WD repeat G protein beta family. Ribosomal protein RACK1 subfamily.

The polypeptide is Small ribosomal subunit protein RACK1 (GB1) (Brassica napus (Rape)).